Consider the following 1116-residue polypeptide: MFSRKKRELMKTPSISKKNRAGSPNPQSSSGELPRKDWTEAPGLEPPATSLSTVAKGTGTLKRPTSLSRHASAAGFPLSGTATWTLVRGYRSPLSAASPAELPTEGAFPDGVEDISTLLADVARFAEGLEKLKECVLQDDLLEARRPLAHECLGEALRVMRQVISRYPLLNTVETLTAAGTLIAKVKAFHYECNNESDKREFEKALETIAVSFSCTVSEFLLGEVDSSTLLAVPPGDPSQSMENLYGAGTEGPPHNVEECEEGCLPPEEVDMLLQRCEGGVDAALQYAKDMARYMKDLISYLEKRTTLEMEFAKGLQKVVHNCRQSVTHEPHMPLLSIYSLALEQDLEFGHGMVQAAGTLQTQTFMQPLTLRRLEHERRRKEIKESWHRAQRKLQEAEANLRKAKQGYKQRCEDHDKARLQVAKAEEEQQGTGPGAGTAASKALDKRRRLEEEAKNKAEEAMATYRTCVADAKTQKQELEDTKVTALRQIQEVIRQSDQTIKSATISYYQLMHMQTAPLPVNFQMLCESSKLYDPGQQYASHVRQLQRGEEPDVRYDFEPYVSNNSWSPIMRTRKGSFNPGDASGPEAAGSPPEEGGTSEAAPNKDHRGGRGHQVHKSWPISISDTEVGLDTSSGDLKKFDRTSSSGTMSSSEELGDQEAGLVASAFDSADLNGMDPELPVAMPSGPFRHVGLSKAARTHRLRKLRTPAKCRECNSYVYFQGAECEECCLACHKKCLETLAIQCGHKKLQGRLQLFGQDFSQAALSTPDGVPFIVKKCVCEIERRALHTKGIYRVNGVKTRVEKLCQAFENGKELVELSQASPHDISNVLKLYLRQLPEPLISFRFYHELVGLAKDSLKAEAEAKAASRGRQGGSESEAATLAMVGRLRELMQDLPAENRATLLYLLKHLRRIVEMEQDNKMTPGNLGIVFGPTLLRPRPTDATVSLSSLVDYPHQARVIETLIVHYGLVFEEEPEEAPGSQEGASTQCGQLESAEGIVFPLQEEAEDGSRESHAASNDSDSELEDASDPLSSSDASALHRLSFLEQTEAGLEEGPQSHSGSEEQLEGEDGAPGPWLCHFNTNQSNNTSRAPLPTMRLRGGQITGGTSQERQPQFV.

Positions 1–72 (MFSRKKRELM…RPTSLSRHAS (72 aa)) are disordered. Residues 22–31 (GSPNPQSSSG) are compositionally biased toward polar residues. Serine 23, serine 72, serine 92, and serine 98 each carry phosphoserine. An F-BAR domain is found at 268–538 (EEVDMLLQRC…SSKLYDPGQQ (271 aa)). Residues 375 to 498 (EHERRRKEIK…QIQEVIRQSD (124 aa)) are a coiled coil. The interval 422 to 457 (VAKAEEEQQGTGPGAGTAASKALDKRRRLEEEAKNK) is disordered. Positions 448–457 (RRLEEEAKNK) are enriched in basic and acidic residues. A phosphoserine mark is found at serine 568, serine 577, serine 591, and serine 618. Positions 569 to 658 (PIMRTRKGSF…MSSSEELGDQ (90 aa)) are disordered. The span at 621 to 635 (ISISDTEVGLDTSSG) shows a compositional bias: polar residues. The span at 643 to 652 (TSSSGTMSSS) shows a compositional bias: low complexity. Residues 699 to 744 (THRLRKLRTPAKCRECNSYVYFQGAECEECCLACHKKCLETLAIQC) form a Phorbol-ester/DAG-type zinc finger. The Rho-GAP domain occupies 758-971 (QDFSQAALST…TLIVHYGLVF (214 aa)). Serine 946, serine 1017, serine 1020, and serine 1022 each carry phosphoserine. 2 disordered regions span residues 1004 to 1035 (EEAE…SSSD) and 1050 to 1116 (AGLE…PQFV). 2 stretches are compositionally biased toward polar residues: residues 1080-1090 (FNTNQSNNTSR) and 1105-1116 (GGTSQERQPQFV).

Its subcellular location is the cytoplasm. The protein resides in the cell projection. It is found in the ruffle membrane. Contains a GTPase activator for the Rho-type GTPases (RhoGAP) domain that would be able to negatively regulate the actin cytoskeleton as well as cell spreading. However, also contains N-terminally a BAR-domin which is able to play an autoinhibitory effect on this RhoGAP activity. This Mus musculus (Mouse) protein is Rho GTPase-activating protein 45.